The sequence spans 260 residues: 3-methyl-2-oxobutanoate hydroxymethyltransferase (260 aa).

Residues Asp-44 and Asp-83 each coordinate Mg(2+). Residues 44–45 (DS), Asp-83, and Lys-113 contribute to the 3-methyl-2-oxobutanoate site. Glu-115 contributes to the Mg(2+) binding site. Glu-183 acts as the Proton acceptor in catalysis.

Belongs to the PanB family. Homodecamer; pentamer of dimers. It depends on Mg(2+) as a cofactor.

The protein localises to the cytoplasm. It catalyses the reaction 3-methyl-2-oxobutanoate + (6R)-5,10-methylene-5,6,7,8-tetrahydrofolate + H2O = 2-dehydropantoate + (6S)-5,6,7,8-tetrahydrofolate. It participates in cofactor biosynthesis; (R)-pantothenate biosynthesis; (R)-pantoate from 3-methyl-2-oxobutanoate: step 1/2. Catalyzes the reversible reaction in which hydroxymethyl group from 5,10-methylenetetrahydrofolate is transferred onto alpha-ketoisovalerate to form ketopantoate. The sequence is that of 3-methyl-2-oxobutanoate hydroxymethyltransferase from Gloeobacter violaceus (strain ATCC 29082 / PCC 7421).